A 171-amino-acid polypeptide reads, in one-letter code: Ribosome-binding factor A (171 aa).

Residues 120–132 (AALAAAAQPAGDP) are compositionally biased toward low complexity. Residues 120 to 171 (AALAAAAQPAGDPDPYKKPVDHTDDWDEDDEDDRDGDDAVDALDAAADVPRL) are disordered. Over residues 133–142 (DPYKKPVDHT) the composition is skewed to basic and acidic residues. Residues 143 to 160 (DDWDEDDEDDRDGDDAVD) are compositionally biased toward acidic residues. The span at 161 to 171 (ALDAAADVPRL) shows a compositional bias: low complexity.

It belongs to the RbfA family. In terms of assembly, monomer. Binds 30S ribosomal subunits, but not 50S ribosomal subunits or 70S ribosomes.

It localises to the cytoplasm. In terms of biological role, one of several proteins that assist in the late maturation steps of the functional core of the 30S ribosomal subunit. Associates with free 30S ribosomal subunits (but not with 30S subunits that are part of 70S ribosomes or polysomes). Required for efficient processing of 16S rRNA. May interact with the 5'-terminal helix region of 16S rRNA. The protein is Ribosome-binding factor A of Kineococcus radiotolerans (strain ATCC BAA-149 / DSM 14245 / SRS30216).